Reading from the N-terminus, the 80-residue chain is Large ribosomal subunit protein eL20 (80 aa).

Belongs to the eukaryotic ribosomal protein eL20 family. Part of the 50S ribosomal subunit. Binds 23S rRNA.

The polypeptide is Large ribosomal subunit protein eL20 (Methanopyrus kandleri (strain AV19 / DSM 6324 / JCM 9639 / NBRC 100938)).